The primary structure comprises 195 residues: Imidazoleglycerol-phosphate dehydratase (195 aa).

This sequence belongs to the imidazoleglycerol-phosphate dehydratase family.

Its subcellular location is the cytoplasm. It carries out the reaction D-erythro-1-(imidazol-4-yl)glycerol 3-phosphate = 3-(imidazol-4-yl)-2-oxopropyl phosphate + H2O. It functions in the pathway amino-acid biosynthesis; L-histidine biosynthesis; L-histidine from 5-phospho-alpha-D-ribose 1-diphosphate: step 6/9. This Shouchella clausii (strain KSM-K16) (Alkalihalobacillus clausii) protein is Imidazoleglycerol-phosphate dehydratase.